The primary structure comprises 188 residues: Inosine triphosphate pyrophosphatase (188 aa).

Residue 11–16 (TGNKHK) coordinates ITP. Position 39 (Glu-39) interacts with Mg(2+). Residues Lys-51, 67–68 (DT), Lys-84, 143–146 (FGWN), and 171–172 (HR) each bind ITP.

Belongs to the HAM1 NTPase family. Homodimer. It depends on Mg(2+) as a cofactor. Mn(2+) serves as cofactor.

It localises to the cytoplasm. The protein resides in the nucleus. It carries out the reaction ITP + H2O = IMP + diphosphate + H(+). The enzyme catalyses dITP + H2O = dIMP + diphosphate + H(+). The catalysed reaction is XTP + H2O = XMP + diphosphate + H(+). Its function is as follows. Pyrophosphatase that hydrolyzes non-canonical purine nucleotides such as inosine triphosphate (ITP), deoxyinosine triphosphate (dITP) or xanthosine 5'-triphosphate (XTP) to their respective monophosphate derivatives. The enzyme does not distinguish between the deoxy- and ribose forms. Probably excludes non-canonical purines from RNA and DNA precursor pools, thus preventing their incorporation into RNA and DNA and avoiding chromosomal lesions. This chain is Inosine triphosphate pyrophosphatase, found in Schizosaccharomyces pombe (strain 972 / ATCC 24843) (Fission yeast).